Consider the following 327-residue polypeptide: tRNA dimethylallyltransferase (327 aa).

14–21 (GPTASGKT) provides a ligand contact to ATP. 16-21 (TASGKT) contributes to the substrate binding site. Interaction with substrate tRNA stretches follow at residues 39–42 (DSAL) and 163–167 (QRIQR).

Belongs to the IPP transferase family. As to quaternary structure, monomer. Mg(2+) is required as a cofactor.

The catalysed reaction is adenosine(37) in tRNA + dimethylallyl diphosphate = N(6)-dimethylallyladenosine(37) in tRNA + diphosphate. In terms of biological role, catalyzes the transfer of a dimethylallyl group onto the adenine at position 37 in tRNAs that read codons beginning with uridine, leading to the formation of N6-(dimethylallyl)adenosine (i(6)A). The chain is tRNA dimethylallyltransferase from Xanthomonas euvesicatoria pv. vesicatoria (strain 85-10) (Xanthomonas campestris pv. vesicatoria).